A 2419-amino-acid polypeptide reads, in one-letter code: Telomere-associated protein RIF1 (2419 aa).

2 disordered regions span residues 1–24 and 373–408; these read MTAPGRSPLEPLLETWEDPSVPPG and SIPSPQGNSSRGSASPGLSPLTPGHKGASPYGSPRG. Over residues 373-385 the composition is skewed to polar residues; the sequence is SIPSPQGNSSRGS. Phosphoserine occurs at positions 385, 391, 779, 976, and 1005. Phosphothreonine is present on Thr1044. A compositionally biased stretch (low complexity) spans 1184–1198; the sequence is SSSTETSVVSSSSVS. Disordered regions lie at residues 1184-1594 and 1613-1637; these read SSST…QAVP and RVILQDSAGPADSLQAPPKGEEKSK. Composition is skewed to polar residues over residues 1199–1217 and 1228–1255; these read NATFSGTPPQPTSRRQTFI and RPFSPSPLNNISSTVTVRNNQDNTTNTD. The residue at position 1215 (Thr1215) is a Phosphothreonine. A phosphoserine mark is found at Ser1231 and Ser1233. Positions 1263–1272 are enriched in basic and acidic residues; that stretch reads REVTNSKSDS. Residues 1289-1302 show a composition bias toward polar residues; it reads AEQSVTKKSKPSLT. The span at 1323–1345 shows a compositional bias: basic and acidic residues; sequence HVSENDDHPSEATLEHKDGDPKP. Phosphoserine occurs at positions 1407, 1439, 1457, and 1498. Positions 1416 to 1455 are enriched in basic and acidic residues; sequence SQERESGQQKKERRKEEEKIISKSPLRIKDDKLPTQKLTD. Residues 1457–1467 show a composition bias toward polar residues; it reads SPIQENLTEKG. Phosphothreonine is present on Thr1504. The segment covering 1507–1516 has biased composition (basic and acidic residues); the sequence is NLDKSSEKPL. Polar residues predominate over residues 1525-1537; the sequence is RRASQGLISAVEN. Residues Ser1528, Ser1538, Ser1540, Ser1542, and Ser1550 each carry the phosphoserine modification. The segment covering 1551 to 1560 has biased composition (basic residues); that stretch reads RKKRSGKWKN. Residues Ser1562 and Ser1565 each carry the phosphoserine modification. The segment covering 1572–1581 has biased composition (basic and acidic residues); sequence EEKKAEEEVM. A phosphoserine mark is found at Ser1680 and Ser1683. Thr1780 is modified (phosphothreonine). At Ser1784 the chain carries Phosphoserine. The segment at 1812 to 1836 is disordered; that stretch reads ASEAVSEIQGPCSENHSPAEDPGLS. A Phosphoserine modification is found at Ser1842. Positions 1882–2419 are interaction with condensed chromosomes in telophase; that stretch reads DAFVAADSEK…RWRSPAHENS (538 aa). Disordered regions lie at residues 1890–1914 and 1929–1983; these read EKSTQMDVSVDVATEEDNKKDECEA and FNSG…AQMS. Ser1931, Ser2094, Ser2109, Ser2121, Ser2125, Ser2144, Ser2153, Ser2208, Ser2287, Ser2341, Ser2413, and Ser2419 each carry phosphoserine. The tract at residues 2119 to 2394 is interaction with ERCC6; that stretch reads VWSPLASPST…TGSQLFEMHE (276 aa). The segment at 2182 to 2212 is disordered; sequence SPIIKSVKTSPTSHSKHNTTSAKGFLSPGSQ. A compositionally biased stretch (polar residues) spans 2189–2212; it reads KTSPTSHSKHNTTSAKGFLSPGSQ.

Belongs to the RIF1 family. In terms of assembly, interacts with TP53BP1 (when phosphorylated by ATM). May interact with TRF2. Interacts with SHLD2. Interacts with ERCC6 (via WHD region). Interacts with ASTE1. Expressed in Sertoli cells, prospermatagonia, early primary spermatocytes, and in oocytes at all stages of their growth. Expressed in embryonic stem (ES) and embryonic germ (EG) cells: expression is lost upon differentiation.

It localises to the nucleus. The protein resides in the chromosome. The protein localises to the telomere. Its subcellular location is the cytoplasm. It is found in the cytoskeleton. It localises to the spindle. In terms of biological role, key regulator of TP53BP1 that plays a key role in the repair of double-strand DNA breaks (DSBs) in response to DNA damage: acts by promoting non-homologous end joining (NHEJ)-mediated repair of DSBs. In response to DNA damage, interacts with ATM-phosphorylated TP53BP1. Interaction with TP53BP1 leads to dissociate the interaction between NUDT16L1/TIRR and TP53BP1, thereby unmasking the tandem Tudor-like domain of TP53BP1 and allowing recruitment to DNA DSBs. Once recruited to DSBs, RIF1 and TP53BP1 act by promoting NHEJ-mediated repair of DSBs. In the same time, RIF1 and TP53BP1 specifically counteract the function of BRCA1 by blocking DSBs resection via homologous recombination (HR) during G1 phase. Also required for immunoglobulin class-switch recombination (CSR) during antibody genesis, a process that involves the generation of DNA DSBs. Promotes NHEJ of dysfunctional telomeres. The chain is Telomere-associated protein RIF1 from Mus musculus (Mouse).